We begin with the raw amino-acid sequence, 264 residues long: Meiotically up-regulated gene 162 protein (264 aa).

Helical transmembrane passes span Ile-18–Lys-38, Leu-54–Ala-74, Val-84–Phe-104, Ile-140–Leu-160, His-174–Ile-194, Phe-199–Thr-219, and Leu-223–Tyr-243.

It localises to the endoplasmic reticulum membrane. Has a role in meiosis. This is Meiotically up-regulated gene 162 protein (mug162) from Schizosaccharomyces pombe (strain 972 / ATCC 24843) (Fission yeast).